The chain runs to 418 residues: D-amino acid dehydrogenase (418 aa).

V3–W17 contributes to the FAD binding site.

It belongs to the DadA oxidoreductase family. FAD serves as cofactor.

The enzyme catalyses a D-alpha-amino acid + A + H2O = a 2-oxocarboxylate + AH2 + NH4(+). The protein operates within amino-acid degradation; D-alanine degradation; NH(3) and pyruvate from D-alanine: step 1/1. Its function is as follows. Oxidative deamination of D-amino acids. The sequence is that of D-amino acid dehydrogenase from Neisseria meningitidis serogroup C (strain 053442).